The sequence spans 726 residues: uncharacterized protein (726 aa).

Catalysis depends on charge relay system residues serine 583 and histidine 698.

This sequence belongs to the peptidase S9B family.

This is an uncharacterized protein from Sinorhizobium fredii (strain NBRC 101917 / NGR234).